Reading from the N-terminus, the 174-residue chain is Centrosomal protein 20 (174 aa).

The interval 1 to 104 (MATVAELKAV…AFEESKDNTI (104 aa)) is necessary and sufficient for homooligomerization and localization to centrosomes and pericentriolar satellites. The LisH domain occupies 49–81 (ENLLINELIREYLEFNKYKYTASVLIAESGQPV). Residues 129-174 (GPSLQPSDPSLGRQPSRRKPMDDHLRKEEQKSTNIEDLHVSQAVNR) are disordered. Ser-144 carries the phosphoserine modification. Over residues 147 to 167 (KPMDDHLRKEEQKSTNIEDLH) the composition is skewed to basic and acidic residues.

This sequence belongs to the CEP43 family. Homooligomer; probably required for localization to centrosomes. Forms a complex with KIAA0753/OFIP and OFD1; within this complex may stabilize the interaction between OFD1 and KIAA0753/OFIP. Interacts with PCM1; this interaction may be mediated by KIAA0753/OFIP. Interacts with PLK1 in later G1, S, G2 and M phases of the cell cycle; this interaction recruits PLK1 to centrosomes. As to expression, widely expressed. Detected in brain, heart, kidney, liver, lung, skeletal muscle, placenta and intestine.

It is found in the cytoplasm. Its subcellular location is the cytoskeleton. The protein localises to the microtubule organizing center. The protein resides in the centrosome. It localises to the centriole. It is found in the cell projection. Its subcellular location is the cilium. The protein localises to the cilium basal body. The protein resides in the cytoplasmic granule. It localises to the centriolar satellite. In terms of biological role, involved in the biogenesis of cilia. Required for the recruitment of PLK1 to centrosomes and S phase progression. This is Centrosomal protein 20 from Homo sapiens (Human).